The chain runs to 60 residues: LKCNKLIPLAYKTCPAGKNLCYKMFMVSNKTVPVKRGCIDVCPKNSLLVKYVCCNTDRCN.

4 cysteine pairs are disulfide-bonded: Cys-3/Cys-21, Cys-14/Cys-38, Cys-42/Cys-53, and Cys-54/Cys-59.

It belongs to the three-finger toxin family. Short-chain subfamily. Type IA cytotoxin sub-subfamily. As to quaternary structure, monomer, or heterodimer with alpha-cobratoxin (AC P01391); disulfide-linked. As to expression, expressed by the venom gland.

The protein localises to the secreted. It is found in the target cell membrane. In terms of biological role, monomer: shows cytolytic activity. Heterodimer: has no cytolytic activity, but retains most of the alpha-cobratoxin capacity to compete with alpha-bungarotoxin for binding to Torpedo and alpha-7/CHRNA7 nicotinic acetylcholine receptors (nAChRs) as well as to Lymnea stagnalis acetylcholine-binding protein. In Naja kaouthia (Monocled cobra), this protein is Cytotoxin 2.